We begin with the raw amino-acid sequence, 376 residues long: Phytanoyl-CoA hydroxylase interacting protein-like (376 aa).

Ser12 and Ser15 each carry phosphoserine. Asn23 carries N-linked (GlcNAc...) asparagine glycosylation. Ser25 bears the Phosphoserine mark. An N-linked (GlcNAc...) asparagine glycan is attached at Asn37. Residues 52-161 form the Fibronectin type-III domain; the sequence is VPRNIKISNI…EIIEFCTADY (110 aa).

This sequence belongs to the PHYHIP family.

Its function is as follows. May play a role in the development of the central system. The chain is Phytanoyl-CoA hydroxylase interacting protein-like (PHYHIPL) from Bos taurus (Bovine).